A 99-amino-acid polypeptide reads, in one-letter code: Malonate decarboxylase acyl carrier protein (99 aa).

Ser-25 bears the O-(phosphoribosyl dephospho-coenzyme A)serine mark.

Belongs to the MdcC family. Post-translationally, covalently binds the prosthetic group of malonate decarboxylase.

Its subcellular location is the cytoplasm. Subunit of malonate decarboxylase, it is an acyl carrier protein to which acetyl and malonyl thioester residues are bound via a 2'-(5''-phosphoribosyl)-3'-dephospho-CoA prosthetic group and turn over during the catalytic mechanism. The protein is Malonate decarboxylase acyl carrier protein of Pseudomonas fluorescens (strain SBW25).